Reading from the N-terminus, the 381-residue chain is Alpha-methylacyl-CoA racemase (381 aa).

Substrate contacts are provided by residues R36 and 54–57 (LDLK). K57 carries the post-translational modification N6-acetyllysine. N6-acetyllysine; alternate occurs at positions 86 and 100. K86 and K100 each carry N6-succinyllysine; alternate. K117 carries the post-translational modification N6-acetyllysine. 120–125 (GHDINY) lines the substrate pocket. The Proton acceptor role is filled by H121. Catalysis depends on D151, which acts as the Proton donor. K267 bears the N6-succinyllysine mark. The tract at residues 316–344 (TDGEQLPSPRPAPLLSRTPAVPSAKRDPS) is disordered. The short motif at 379-381 (ANL) is the Microbody targeting signal element.

Belongs to the CoA-transferase III family. In terms of assembly, monomer.

The protein resides in the peroxisome. It is found in the mitochondrion. The enzyme catalyses a (2S)-2-methylacyl-CoA = a (2R)-2-methylacyl-CoA. The catalysed reaction is (25R)-3alpha,7alpha,12alpha-trihydroxy-5beta-cholestan-26-oyl-CoA = (25S)-3alpha,7alpha,12alpha-trihydroxy-5beta-cholestan-26-oyl-CoA. It catalyses the reaction (2R,6)-dimethylheptanoyl-CoA = (2S,6)-dimethylheptanoyl-CoA. It participates in lipid metabolism; bile acid biosynthesis. Its pathway is lipid metabolism; fatty acid metabolism. Catalyzes the interconversion of (R)- and (S)-stereoisomers of alpha-methyl-branched-chain fatty acyl-CoA esters. Acts only on coenzyme A thioesters, not on free fatty acids, and accepts as substrates a wide range of alpha-methylacyl-CoAs, including pristanoyl-CoA, trihydroxycoprostanoyl-CoA (an intermediate in bile acid synthesis), and arylpropionic acids like the anti-inflammatory drug ibuprofen (2-(4-isobutylphenyl)propionic acid) but neither 3-methyl-branched nor linear-chain acyl-CoAs. This Mus musculus (Mouse) protein is Alpha-methylacyl-CoA racemase (Amacr).